A 241-amino-acid polypeptide reads, in one-letter code: Probable 2-phosphosulfolactate phosphatase (241 aa).

It belongs to the ComB family. Mg(2+) is required as a cofactor.

The enzyme catalyses (2R)-O-phospho-3-sulfolactate + H2O = (2R)-3-sulfolactate + phosphate. The sequence is that of Probable 2-phosphosulfolactate phosphatase from Deinococcus geothermalis (strain DSM 11300 / CIP 105573 / AG-3a).